The sequence spans 1209 residues: Zinc finger protein 804A (1209 aa).

The C2H2-type zinc-finger motif lies at 57 to 81 (FYCELCDKQYYKHQEFDNHINSYDH). A compositionally biased stretch (basic and acidic residues) spans 380 to 394 (VKHNEASTTEVENKN). Disordered stretches follow at residues 380 to 401 (VKHNEASTTEVENKNGPETLAP) and 792 to 860 (PEEF…MKPQ). A compositionally biased stretch (basic residues) spans 807–819 (KPKKKRRRKRGRF). Basic and acidic residues-rich tracts occupy residues 826–836 (LELKENTDYPV) and 848–860 (LISEDKKEKMKPQ).

This Homo sapiens (Human) protein is Zinc finger protein 804A (ZNF804A).